The primary structure comprises 315 residues: Ribosomal RNA small subunit methyltransferase H (315 aa).

Residues glycine 36–histidine 38, aspartate 56, phenylalanine 81, aspartate 103, and glutamine 110 each bind S-adenosyl-L-methionine.

This sequence belongs to the methyltransferase superfamily. RsmH family.

The protein resides in the cytoplasm. The catalysed reaction is cytidine(1402) in 16S rRNA + S-adenosyl-L-methionine = N(4)-methylcytidine(1402) in 16S rRNA + S-adenosyl-L-homocysteine + H(+). Specifically methylates the N4 position of cytidine in position 1402 (C1402) of 16S rRNA. This chain is Ribosomal RNA small subunit methyltransferase H, found in Idiomarina loihiensis (strain ATCC BAA-735 / DSM 15497 / L2-TR).